The following is a 397-amino-acid chain: CCA-adding enzyme (397 aa).

Residues Gly32 and Arg35 each coordinate ATP. Residues Gly32 and Arg35 each coordinate CTP. Mg(2+) is bound by residues Asp45 and Asp47. The ATP site is built by Arg116, Asp159, Arg162, Arg165, and Arg168. The CTP site is built by Arg116, Asp159, Arg162, Arg165, and Arg168.

It belongs to the tRNA nucleotidyltransferase/poly(A) polymerase family. Bacterial CCA-adding enzyme type 3 subfamily. As to quaternary structure, homodimer. Requires Mg(2+) as cofactor.

The enzyme catalyses a tRNA precursor + 2 CTP + ATP = a tRNA with a 3' CCA end + 3 diphosphate. It carries out the reaction a tRNA with a 3' CCA end + 2 CTP + ATP = a tRNA with a 3' CCACCA end + 3 diphosphate. In terms of biological role, catalyzes the addition and repair of the essential 3'-terminal CCA sequence in tRNAs without using a nucleic acid template. Adds these three nucleotides in the order of C, C, and A to the tRNA nucleotide-73, using CTP and ATP as substrates and producing inorganic pyrophosphate. tRNA 3'-terminal CCA addition is required both for tRNA processing and repair. Also involved in tRNA surveillance by mediating tandem CCA addition to generate a CCACCA at the 3' terminus of unstable tRNAs. While stable tRNAs receive only 3'-terminal CCA, unstable tRNAs are marked with CCACCA and rapidly degraded. The chain is CCA-adding enzyme from Latilactobacillus sakei subsp. sakei (strain 23K) (Lactobacillus sakei subsp. sakei).